The following is a 264-amino-acid chain: Thiazole synthase (264 aa).

The active-site Schiff-base intermediate with DXP is Lys-106. 1-deoxy-D-xylulose 5-phosphate contacts are provided by residues Gly-167, Ala-193–Gly-194, and Asn-215–Ser-216.

Belongs to the ThiG family. As to quaternary structure, homotetramer. Forms heterodimers with either ThiH or ThiS.

The protein resides in the cytoplasm. The enzyme catalyses [ThiS sulfur-carrier protein]-C-terminal-Gly-aminoethanethioate + 2-iminoacetate + 1-deoxy-D-xylulose 5-phosphate = [ThiS sulfur-carrier protein]-C-terminal Gly-Gly + 2-[(2R,5Z)-2-carboxy-4-methylthiazol-5(2H)-ylidene]ethyl phosphate + 2 H2O + H(+). The protein operates within cofactor biosynthesis; thiamine diphosphate biosynthesis. Functionally, catalyzes the rearrangement of 1-deoxy-D-xylulose 5-phosphate (DXP) to produce the thiazole phosphate moiety of thiamine. Sulfur is provided by the thiocarboxylate moiety of the carrier protein ThiS. In vitro, sulfur can be provided by H(2)S. This chain is Thiazole synthase, found in Pseudomonas putida (strain W619).